Here is a 132-residue protein sequence, read N- to C-terminus: UPF0299 membrane protein YohJ (132 aa).

The next 4 helical transmembrane spans lie at 7-27 (IIWQ…AGIF), 31-51 (LLPI…VLLA), 63-83 (GCYV…VGVM), and 93-113 (FGPV…VVSW).

The protein belongs to the UPF0299 family.

The protein localises to the cell inner membrane. This is UPF0299 membrane protein YohJ from Salmonella agona (strain SL483).